The primary structure comprises 655 residues: p-hydroxybenzoic acid efflux pump subunit AaeB (655 aa).

Topologically, residues 1–12 are periplasmic; it reads MGIFSIANQHIR. Residues 13 to 33 form a helical membrane-spanning segment; that stretch reads FAVKLATAIVLALFVGFHFQL. Topologically, residues 34–37 are cytoplasmic; it reads ETPR. A helical membrane pass occupies residues 38 to 58; the sequence is WAVLTAAIVAAGPAFAAGGEP. Topologically, residues 59–68 are periplasmic; it reads YSGAIRYRGF. Residues 69–89 form a helical membrane-spanning segment; it reads LRIIGTFIGCIAGLVIIIAMI. The Cytoplasmic segment spans residues 90 to 92; sequence RAP. Residues 93-113 traverse the membrane as a helical segment; sequence LLMILVCCIWAGFCTWISSLV. The Periplasmic segment spans residues 114 to 120; it reads RIENSYA. Residues 121–141 traverse the membrane as a helical segment; the sequence is WGLAGYTALIIVITIQPEPLL. At 142 to 151 the chain is on the cytoplasmic side; that stretch reads TPQFAVERCS. A helical membrane pass occupies residues 152–172; it reads EIVIGIVCAIMADLLFSPRSI. Residues 173 to 369 lie on the Periplasmic side of the membrane; that stretch reads KQEVDRELES…RTTLSCILGT (197 aa). A helical membrane pass occupies residues 370–390; that stretch reads LFWLWTGWTSGSGAMVMIAVV. Residues 391-406 lie on the Cytoplasmic side of the membrane; it reads TSLAMRLPNPRMVAID. The chain crosses the membrane as a helical span at residues 407–427; that stretch reads FIYGTLAALPLGLLYFLVIIP. Topologically, residues 428-430 are periplasmic; it reads NTQ. A helical transmembrane segment spans residues 431-451; sequence QSMLLLCISLAVLGFFLGIEV. The Cytoplasmic portion of the chain corresponds to 452–458; it reads QKRRLGS. A helical transmembrane segment spans residues 459 to 479; it reads MGALASTINIIVLDNPMTFHF. The Periplasmic portion of the chain corresponds to 480 to 481; the sequence is SQ. A helical membrane pass occupies residues 482-502; that stretch reads FLDSALGQIVGCVLAFTVILL. Residues 503–655 are Cytoplasmic-facing; it reads VRDKSRDRTG…HKYQHALTDS (153 aa).

The protein belongs to the aromatic acid exporter ArAE (TC 2.A.85) family.

The protein localises to the cell inner membrane. Its function is as follows. Forms an efflux pump with AaeA. Could function as a metabolic relief valve, allowing to eliminate certain compounds when they accumulate to high levels in the cell. The protein is p-hydroxybenzoic acid efflux pump subunit AaeB of Escherichia coli O6:H1 (strain CFT073 / ATCC 700928 / UPEC).